Reading from the N-terminus, the 160-residue chain is MSTLKKPDLSDPKLRAKLAKGMGHNYYGEPAWPNDLLYIFPVVILGTIACVVGLAVLDPAMLGDKANPFATPLEILPEWYLYPVFQILRVVPNKLLGIALQTLIPLGLMILPFIENVNKFSNPFRRPIAMSLFLFGTFLTIYLGIGACLPIDKSLTLGLF.

The next 3 helical transmembrane spans lie at 36–56, 95–115, and 128–148; these read LLYI…GLAV, LLGI…PFIE, and IAMS…IGAC.

The protein belongs to the cytochrome b family. PetD subfamily. The 4 large subunits of the cytochrome b6-f complex are cytochrome b6, subunit IV (17 kDa polypeptide, PetD), cytochrome f and the Rieske protein, while the 4 small subunits are PetG, PetL, PetM and PetN. The complex functions as a dimer.

It localises to the cellular thylakoid membrane. Functionally, component of the cytochrome b6-f complex, which mediates electron transfer between photosystem II (PSII) and photosystem I (PSI), cyclic electron flow around PSI, and state transitions. The chain is Cytochrome b6-f complex subunit 4 from Prochlorococcus marinus (strain MIT 9312).